We begin with the raw amino-acid sequence, 174 residues long: MAAAAELKLLEKSLGLRPGNKYSAQGERQIPVLQTNNGPSLTGLATIATHLVKQASKEHLLGSTAEEKALVQQWLEYRITQVDGHSSKEDTHTLLKDLNSYLEDKVYLAGYNITLADILLYYGLHRFIVDLTVQEKEKYLNVSRWFCHIQHYPDIRQHLSSVVFIKNRLYANSH.

N-acetylalanine is present on Ala2. The tract at residues 2–56 is N-terminal; that stretch reads AAAAELKLLEKSLGLRPGNKYSAQGERQIPVLQTNNGPSLTGLATIATHLVKQAS. The region spanning 50–173 is the GST C-terminal domain; that stretch reads HLVKQASKEH…FIKNRLYANS (124 aa). Positions 57-63 are linker; that stretch reads KEHLLGS. Residues 64 to 152 form a C-terminal region; sequence TAEEKALVQQ…SRWFCHIQHY (89 aa). Residue Lys138 is modified to N6-acetyllysine. A coiled-coil region spans residues 153-169; sequence PDIRQHLSSVVFIKNRL.

In terms of assembly, part of a multisubunit complex that groups tRNA ligases for Arg (RARS1), Asp (DARS1), Gln (QARS1), Ile (IARS1), Leu (LARS1), Lys (KARS1), Met (MARS1) the bifunctional ligase for Glu and Pro (EPRS1) and the auxiliary subunits AIMP1/p43, AIMP2/p38 and EEF1E1/p18. Can interact simultaneously with MARS1 and EPRS1. Forms a linear complex that contains MARS1, EEF1E1, EPRS1 and AIMP2 that is at the core of the multisubunit complex. Interacts with ATM and ATR. The interaction with ATM, which takes place independently of TP53, is induced by DNA damage that may occur during genotoxic stress or cell growth. The interaction with ATR is enhanced by UV irradiation.

It localises to the cytoplasm. The protein resides in the nucleus. Its function is as follows. Positive modulator of ATM response to DNA damage. The sequence is that of Eukaryotic translation elongation factor 1 epsilon-1 (EEF1E1) from Cricetulus griseus (Chinese hamster).